Consider the following 310-residue polypeptide: Ribosomal protein L11 methyltransferase (310 aa).

S-adenosyl-L-methionine-binding residues include Thr153, Gly174, Asp196, and Asn239.

This sequence belongs to the methyltransferase superfamily. PrmA family.

It localises to the cytoplasm. The catalysed reaction is L-lysyl-[protein] + 3 S-adenosyl-L-methionine = N(6),N(6),N(6)-trimethyl-L-lysyl-[protein] + 3 S-adenosyl-L-homocysteine + 3 H(+). In terms of biological role, methylates ribosomal protein L11. The protein is Ribosomal protein L11 methyltransferase of Janthinobacterium sp. (strain Marseille) (Minibacterium massiliensis).